Here is a 154-residue protein sequence, read N- to C-terminus: Transcriptional repressor NrdR (154 aa).

A zinc finger lies at 3 to 34 (CPTCKYNGTRVVDSRPADDGNSIRRRRECEKC). An ATP-cone domain is found at 49–139 (LIVVKKDGAR…VYRQFKDISV (91 aa)).

The protein belongs to the NrdR family. Zn(2+) is required as a cofactor.

Functionally, negatively regulates transcription of bacterial ribonucleotide reductase nrd genes and operons by binding to NrdR-boxes. The sequence is that of Transcriptional repressor NrdR from Listeria innocua serovar 6a (strain ATCC BAA-680 / CLIP 11262).